The following is a 245-amino-acid chain: MSQVNMRDMLKAGVHFGHQTRYWNPKMGKYIFGARNKIHIINLEKTLPMFNEALTFVERLAQGKNKILFVGTKRSAGKIVAEEAARCGSPYVDHRWLGGMLTNYKTIRASIKRLRDLEVQAEDGTFAKLTKKEALMRTRDLEKLDRSLGGIKDMGGLPDALFVIDVDHERIAITEANKLGIPVIGVVDTNSSPEGVDYIIPGNDDAIRAIQLYMGSMADAVIRGRNNVAGGTEVFEEAAAPAAEA.

It belongs to the universal ribosomal protein uS2 family.

This Pseudomonas fluorescens (strain ATCC BAA-477 / NRRL B-23932 / Pf-5) protein is Small ribosomal subunit protein uS2.